Reading from the N-terminus, the 123-residue chain is MPTINQLIRHGRESKGDKSTAPALRSCPQKRGVCTRVYTTTPKKPNSALRKVARVRLTNGVEVTSYIPGVGHNLQEHSVVLIRGGRVKDLPGVRYHIVRGTLDSVGVKGRMKSRSKYGAKRPK.

Aspartate 89 carries the 3-methylthioaspartic acid modification.

Belongs to the universal ribosomal protein uS12 family. Part of the 30S ribosomal subunit. Contacts proteins S8 and S17. May interact with IF1 in the 30S initiation complex.

In terms of biological role, with S4 and S5 plays an important role in translational accuracy. Interacts with and stabilizes bases of the 16S rRNA that are involved in tRNA selection in the A site and with the mRNA backbone. Located at the interface of the 30S and 50S subunits, it traverses the body of the 30S subunit contacting proteins on the other side and probably holding the rRNA structure together. The combined cluster of proteins S8, S12 and S17 appears to hold together the shoulder and platform of the 30S subunit. The sequence is that of Small ribosomal subunit protein uS12 from Citrifermentans bemidjiense (strain ATCC BAA-1014 / DSM 16622 / JCM 12645 / Bem) (Geobacter bemidjiensis).